Here is a 593-residue protein sequence, read N- to C-terminus: Chaperone protein DnaK (593 aa).

Residue threonine 181 is modified to Phosphothreonine; by autocatalysis.

This sequence belongs to the heat shock protein 70 family.

Its function is as follows. Acts as a chaperone. The polypeptide is Chaperone protein DnaK (Mycoplasmoides gallisepticum (strain R(low / passage 15 / clone 2)) (Mycoplasma gallisepticum)).